We begin with the raw amino-acid sequence, 355 residues long: dTDP-glucose 4,6-dehydratase (355 aa).

Residues 12–13 (FI), 33–36 (DKLT), 59–60 (DI), 81–85 (LAAES), and T100 contribute to the NAD(+) site. S85 is a substrate binding site. T134 contacts substrate. D135 functions as the Proton donor in the catalytic mechanism. Active-site proton acceptor residues include E136 and Y160. 160 to 164 (YSASK) is a binding site for NAD(+). N189 is a binding site for substrate. N190 contributes to the NAD(+) binding site. Substrate is bound by residues 199–200 (KL), 215–217 (PVY), R224, N259, and 293–297 (DRPGH).

This sequence belongs to the NAD(P)-dependent epimerase/dehydratase family. dTDP-glucose dehydratase subfamily. As to quaternary structure, homodimer. The cofactor is NAD(+).

The enzyme catalyses dTDP-alpha-D-glucose = dTDP-4-dehydro-6-deoxy-alpha-D-glucose + H2O. Its pathway is carbohydrate biosynthesis; dTDP-L-rhamnose biosynthesis. It participates in bacterial outer membrane biogenesis; LPS O-antigen biosynthesis. Catalyzes the dehydration of dTDP-D-glucose to form dTDP-6-deoxy-D-xylo-4-hexulose via a three-step process involving oxidation, dehydration and reduction. This Neisseria meningitidis serogroup B (strain ATCC BAA-335 / MC58) protein is dTDP-glucose 4,6-dehydratase (rfbB1).